A 332-amino-acid polypeptide reads, in one-letter code: MQFALMSGLVAFLATVLLIPRFITFYQAKRIEGQQMHEDVKQHQFKAGTPTMGGTVFLVVAILVSLLFATAFQLLTGGVLAILFILALYGVVGFLDDFLKIFRKINEGLNPKQKLALQILGGIVFYFVHVRGAGGGELNVFGHMVHLGVLYFPFVLFWLVGFSNAVNLTDGIDGLASISVVISLLAYSVIAFNEQKFDILLVCVTMIGGLLGFFVYNRKPAKIFMGDVGSLALGGMLATISIALRQEWTLLLIGLVYVIETSSVMLQVSYFKYTKKRFGEGRRIFRMTPFHHHLELGGLTGKAEKWSEWKVDFFLWSVGLIMSLITLAILYL.

10 consecutive transmembrane segments (helical) span residues 3-23 (FALMSGLVAFLATVLLIPRFI), 52-72 (MGGTVFLVVAILVSLLFATAF), 74-94 (LLTGGVLAILFILALYGVVGF), 115-135 (LALQILGGIVFYFVHVRGAGG), 140-160 (VFGHMVHLGVLYFPFVLFWLV), 172-192 (IDGLASISVVISLLAYSVIAF), 197-217 (FDILLVCVTMIGGLLGFFVYN), 223-243 (IFMGDVGSLALGGMLATISIA), 248-268 (WTLLLIGLVYVIETSSVMLQV), and 311-331 (VDFFLWSVGLIMSLITLAILY).

This sequence belongs to the glycosyltransferase 4 family. MraY subfamily. Mg(2+) serves as cofactor.

The protein localises to the cell membrane. The catalysed reaction is UDP-N-acetyl-alpha-D-muramoyl-L-alanyl-gamma-D-glutamyl-L-lysyl-D-alanyl-D-alanine + di-trans,octa-cis-undecaprenyl phosphate = Mur2Ac(oyl-L-Ala-gamma-D-Glu-L-Lys-D-Ala-D-Ala)-di-trans,octa-cis-undecaprenyl diphosphate + UMP. It participates in cell wall biogenesis; peptidoglycan biosynthesis. Catalyzes the initial step of the lipid cycle reactions in the biosynthesis of the cell wall peptidoglycan: transfers peptidoglycan precursor phospho-MurNAc-pentapeptide from UDP-MurNAc-pentapeptide onto the lipid carrier undecaprenyl phosphate, yielding undecaprenyl-pyrophosphoryl-MurNAc-pentapeptide, known as lipid I. The protein is Phospho-N-acetylmuramoyl-pentapeptide-transferase of Streptococcus suis (strain 98HAH33).